A 346-amino-acid polypeptide reads, in one-letter code: tRNA N6-adenosine threonylcarbamoyltransferase (346 aa).

2 residues coordinate Fe cation: H111 and H115. Residues 134-138, D167, G180, and N279 contribute to the substrate site; that span reads LVSGG. D307 is a binding site for Fe cation.

It belongs to the KAE1 / TsaD family. Fe(2+) is required as a cofactor.

It is found in the cytoplasm. It catalyses the reaction L-threonylcarbamoyladenylate + adenosine(37) in tRNA = N(6)-L-threonylcarbamoyladenosine(37) in tRNA + AMP + H(+). In terms of biological role, required for the formation of a threonylcarbamoyl group on adenosine at position 37 (t(6)A37) in tRNAs that read codons beginning with adenine. Is involved in the transfer of the threonylcarbamoyl moiety of threonylcarbamoyl-AMP (TC-AMP) to the N6 group of A37, together with TsaE and TsaB. TsaD likely plays a direct catalytic role in this reaction. In Burkholderia pseudomallei (strain K96243), this protein is tRNA N6-adenosine threonylcarbamoyltransferase.